The primary structure comprises 98 residues: uncharacterized protein (98 aa).

The signal sequence occupies residues 1–23; the sequence is MKKMQSIVLALSLVLVAPMAAQA. Residues 68–98 are disordered; the sequence is WHLHGPPPPPRHHKKAPHDHHGGHGPGKHHR. Residues 77–98 are compositionally biased toward basic residues; sequence PRHHKKAPHDHHGGHGPGKHHR.

To E.coli YpeC.

This is an uncharacterized protein from Escherichia coli (strain K12).